The following is a 363-amino-acid chain: Phosphoribosylformylglycinamidine cyclo-ligase (363 aa).

The protein belongs to the AIR synthase family.

The protein localises to the cytoplasm. The enzyme catalyses 2-formamido-N(1)-(5-O-phospho-beta-D-ribosyl)acetamidine + ATP = 5-amino-1-(5-phospho-beta-D-ribosyl)imidazole + ADP + phosphate + H(+). The protein operates within purine metabolism; IMP biosynthesis via de novo pathway; 5-amino-1-(5-phospho-D-ribosyl)imidazole from N(2)-formyl-N(1)-(5-phospho-D-ribosyl)glycinamide: step 2/2. The protein is Phosphoribosylformylglycinamidine cyclo-ligase of Bartonella tribocorum (strain CIP 105476 / IBS 506).